Here is a 431-residue protein sequence, read N- to C-terminus: Glutamate-1-semialdehyde 2,1-aminomutase (431 aa).

Position 269 is an N6-(pyridoxal phosphate)lysine (K269).

The protein belongs to the class-III pyridoxal-phosphate-dependent aminotransferase family. HemL subfamily. As to quaternary structure, homodimer. Requires pyridoxal 5'-phosphate as cofactor.

Its subcellular location is the cytoplasm. It catalyses the reaction (S)-4-amino-5-oxopentanoate = 5-aminolevulinate. The protein operates within porphyrin-containing compound metabolism; protoporphyrin-IX biosynthesis; 5-aminolevulinate from L-glutamyl-tRNA(Glu): step 2/2. This chain is Glutamate-1-semialdehyde 2,1-aminomutase, found in Francisella tularensis subsp. tularensis (strain WY96-3418).